The chain runs to 197 residues: Protein shisa-4 (197 aa).

The N-terminal stretch at 1–27 (MPPAGPRGTAPLAAVVLLVLGAPLALA) is a signal peptide. Topologically, residues 28-87 (SEDCLWYLDRNGSWHPGFDCEFFTFCCGTCYQRYCCRDLTLLITERQQKHCLAFSPKTIA) are extracellular. A helical transmembrane segment spans residues 88-108 (GIASAVILFVAVVATTICCFL). Topologically, residues 109–197 (CSCCYLYRRR…MPPQPSYPGA (89 aa)) are cytoplasmic.

It belongs to the shisa family.

The protein localises to the membrane. The chain is Protein shisa-4 (Shisa4) from Mus musculus (Mouse).